The primary structure comprises 277 residues: ATP synthase subunit a (277 aa).

5 consecutive transmembrane segments (helical) span residues 40–60 (AWHVDTLAWSIGLGLLFLIIF), 98–118 (SALIAPLALTIFVWVLLMNLM), 154–174 (DLNLTFALASGVFILILFYSI), 219–239 (LFGNLYASELIFILIATIGYF), and 245–265 (FMWAVFHILVLPLQAFIFMML).

It belongs to the ATPase A chain family. As to quaternary structure, F-type ATPases have 2 components, CF(1) - the catalytic core - and CF(0) - the membrane proton channel. CF(1) has five subunits: alpha(3), beta(3), gamma(1), delta(1), epsilon(1). CF(0) has three main subunits: a(1), b(2) and c(9-12). The alpha and beta chains form an alternating ring which encloses part of the gamma chain. CF(1) is attached to CF(0) by a central stalk formed by the gamma and epsilon chains, while a peripheral stalk is formed by the delta and b chains.

The protein resides in the cell inner membrane. Key component of the proton channel; it plays a direct role in the translocation of protons across the membrane. The protein is ATP synthase subunit a of Alteromonas mediterranea (strain DSM 17117 / CIP 110805 / LMG 28347 / Deep ecotype).